The primary structure comprises 577 residues: Arginine--tRNA ligase (577 aa).

The 'HIGH' region signature appears at 122–132 (PNVAKEMHVGH).

It belongs to the class-I aminoacyl-tRNA synthetase family. Monomer.

The protein resides in the cytoplasm. It carries out the reaction tRNA(Arg) + L-arginine + ATP = L-arginyl-tRNA(Arg) + AMP + diphosphate. This is Arginine--tRNA ligase (argS) from Salmonella typhimurium (strain SL1344).